Here is a 32-residue protein sequence, read N- to C-terminus: Cytochrome b6-f complex subunit 7 (32 aa).

The chain crosses the membrane as a helical span at residues 9–27 (AAVFWILIPIGLVGGALLL).

This sequence belongs to the PetM family. As to quaternary structure, the 4 large subunits of the cytochrome b6-f complex are cytochrome b6, subunit IV (17 kDa polypeptide, PetD), cytochrome f and the Rieske protein, while the 4 small subunits are PetG, PetL, PetM and PetN. The complex functions as a dimer.

It localises to the cellular thylakoid membrane. Functionally, component of the cytochrome b6-f complex, which mediates electron transfer between photosystem II (PSII) and photosystem I (PSI), cyclic electron flow around PSI, and state transitions. This Prochlorococcus marinus (strain MIT 9515) protein is Cytochrome b6-f complex subunit 7.